Consider the following 358-residue polypeptide: Peptide chain release factor 1 (358 aa).

Glutamine 233 is modified (N5-methylglutamine).

Belongs to the prokaryotic/mitochondrial release factor family. Methylated by PrmC. Methylation increases the termination efficiency of RF1.

It localises to the cytoplasm. In terms of biological role, peptide chain release factor 1 directs the termination of translation in response to the peptide chain termination codons UAG and UAA. This is Peptide chain release factor 1 from Agathobacter rectalis (strain ATCC 33656 / DSM 3377 / JCM 17463 / KCTC 5835 / VPI 0990) (Eubacterium rectale).